Consider the following 166-residue polypeptide: Large ribosomal subunit protein uL10 (166 aa).

It belongs to the universal ribosomal protein uL10 family. In terms of assembly, part of the ribosomal stalk of the 50S ribosomal subunit. The N-terminus interacts with L11 and the large rRNA to form the base of the stalk. The C-terminus forms an elongated spine to which L12 dimers bind in a sequential fashion forming a multimeric L10(L12)X complex.

In terms of biological role, forms part of the ribosomal stalk, playing a central role in the interaction of the ribosome with GTP-bound translation factors. This chain is Large ribosomal subunit protein uL10, found in Azotobacter vinelandii (strain DJ / ATCC BAA-1303).